Reading from the N-terminus, the 276-residue chain is 4-hydroxy-tetrahydrodipicolinate reductase (276 aa).

Residues 10–15 (GALGKM), Asp-36, and 109–111 (GTT) each bind NAD(+). Residue His-165 is the Proton donor/acceptor of the active site. His-166 contacts (S)-2,3,4,5-tetrahydrodipicolinate. Lys-169 (proton donor) is an active-site residue. 175 to 176 (GT) lines the (S)-2,3,4,5-tetrahydrodipicolinate pocket.

The protein belongs to the DapB family.

The protein resides in the cytoplasm. The catalysed reaction is (S)-2,3,4,5-tetrahydrodipicolinate + NAD(+) + H2O = (2S,4S)-4-hydroxy-2,3,4,5-tetrahydrodipicolinate + NADH + H(+). It catalyses the reaction (S)-2,3,4,5-tetrahydrodipicolinate + NADP(+) + H2O = (2S,4S)-4-hydroxy-2,3,4,5-tetrahydrodipicolinate + NADPH + H(+). The protein operates within amino-acid biosynthesis; L-lysine biosynthesis via DAP pathway; (S)-tetrahydrodipicolinate from L-aspartate: step 4/4. Catalyzes the conversion of 4-hydroxy-tetrahydrodipicolinate (HTPA) to tetrahydrodipicolinate. This Prochlorococcus marinus (strain SARG / CCMP1375 / SS120) protein is 4-hydroxy-tetrahydrodipicolinate reductase.